The sequence spans 739 residues: Nucleoprotein (739 aa).

A coiled-coil region spans residues 334–363 (VNVGEQYQQLREAATEAEKQLQQYAESREL). 2 disordered regions span residues 414–475 (RPNL…YHDD) and 498–642 (FELQ…IGQS). Residues 570–579 (TPIDQGDDDP) show a composition bias toward acidic residues. The span at 614–624 (AEAHEPPHKSS) shows a compositional bias: basic and acidic residues. A compositionally biased stretch (polar residues) spans 625 to 634 (NEPAETSQLN).

This sequence belongs to the filoviruses nucleoprotein family. In terms of assembly, homooligomer. Homomultimerizes to form the nucleocapsid. Binds to viral genomic RNA. Interacts with VP35 and VP30 to form the nucleocapsid. Interacts with host PPP2R5C; this interaction leads to VP30 dephosphorylation and viral transcription. Interacts with VP24; this interaction facilitates nucleocapsid assembly and genome packaging. Interacts with matrix protein VP40; this interaction allows recruitment of the nucleocapsid into progeny virions. Interacts with host STAU1. Interacts with host NXF1 (via RNA-binding domain); this interaction recruits NXF1 to the inclusion bodies were viral replication takes place, probably to export viral mRNA-NXF1 complexes from these sites. Interacts with host CCDC92; this interaction sequesters NP in the host cytoplasm. Interacts with host TRIM14. In terms of processing, phosphorylated and O-glycosylated by host. Acetylated by host EP300 in vitro.

It localises to the virion. The protein resides in the host cytoplasm. In terms of biological role, oligomerizes into helical capsid to encapsidate the viral genome, protecting it from nucleases and the cellular innate immune response. VP35 binds to and stabilizes monomeric NP, keeping it soluble. Upon virus replication, NP is recruited to bind cooperatively viral genomic RNA and VP35 is released. The encapsidated genomic RNA is termed the nucleocapsid and serves as template for transcription and replication. The nucleocapsid is helical with a pitch of 10.81 NP per turn and a diameter of about 22nm. Each NP binds to six nucleotides of viral genomic RNA, three being exposed to the solvant and three hidden into the nucleocapsid. Also recruits host PPP2R5C phosphatase to dephosphorylate VP30 and thereby promote viral transcription. Upon virion assembly and budding, NP binds to VP24 and possibly host STAU1. The polypeptide is Nucleoprotein (NP) (Homo sapiens (Human)).